A 339-amino-acid polypeptide reads, in one-letter code: Dihydroorotate dehydrogenase (quinone) (339 aa).

FMN is bound by residues 64–68 (AGADK) and T88. K68 is a substrate binding site. Residue 113–117 (NRNGF) participates in substrate binding. Positions 141 and 174 each coordinate FMN. N174 serves as a coordination point for substrate. S177 serves as the catalytic Nucleophile. Substrate is bound at residue N179. Positions 219 and 247 each coordinate FMN. 248 to 249 (NT) provides a ligand contact to substrate. FMN is bound by residues G270, G299, and 320–321 (YS).

It belongs to the dihydroorotate dehydrogenase family. Type 2 subfamily. As to quaternary structure, monomer. FMN is required as a cofactor.

It is found in the cell membrane. It catalyses the reaction (S)-dihydroorotate + a quinone = orotate + a quinol. The protein operates within pyrimidine metabolism; UMP biosynthesis via de novo pathway; orotate from (S)-dihydroorotate (quinone route): step 1/1. Catalyzes the conversion of dihydroorotate to orotate with quinone as electron acceptor. The polypeptide is Dihydroorotate dehydrogenase (quinone) (pyrD) (Haemophilus influenzae (strain ATCC 51907 / DSM 11121 / KW20 / Rd)).